The chain runs to 304 residues: Acetyl-coenzyme A carboxylase carboxyl transferase subunit beta (304 aa).

A CoA carboxyltransferase N-terminal domain is found at 23 to 292 (VWTKCDSCGQ…PNPEAPREGV (270 aa)). Zn(2+) is bound by residues Cys-27, Cys-30, Cys-46, and Cys-49. The segment at 27 to 49 (CDSCGQVLYRAELERNLEVCPKC) adopts a C4-type zinc-finger fold. Residues 284 to 304 (NPEAPREGVVVPPVPDQEPEA) are disordered. The span at 295–304 (PPVPDQEPEA) shows a compositional bias: pro residues.

The protein belongs to the AccD/PCCB family. Acetyl-CoA carboxylase is a heterohexamer composed of biotin carboxyl carrier protein (AccB), biotin carboxylase (AccC) and two subunits each of ACCase subunit alpha (AccA) and ACCase subunit beta (AccD). Zn(2+) is required as a cofactor.

The protein localises to the cytoplasm. The catalysed reaction is N(6)-carboxybiotinyl-L-lysyl-[protein] + acetyl-CoA = N(6)-biotinyl-L-lysyl-[protein] + malonyl-CoA. Its pathway is lipid metabolism; malonyl-CoA biosynthesis; malonyl-CoA from acetyl-CoA: step 1/1. Its function is as follows. Component of the acetyl coenzyme A carboxylase (ACC) complex. Biotin carboxylase (BC) catalyzes the carboxylation of biotin on its carrier protein (BCCP) and then the CO(2) group is transferred by the transcarboxylase to acetyl-CoA to form malonyl-CoA. This Shigella flexneri protein is Acetyl-coenzyme A carboxylase carboxyl transferase subunit beta.